We begin with the raw amino-acid sequence, 90 residues long: Small ribosomal subunit protein uS15 (90 aa).

Belongs to the universal ribosomal protein uS15 family. As to quaternary structure, part of the 30S ribosomal subunit. Forms a bridge to the 50S subunit in the 70S ribosome, contacting the 23S rRNA.

One of the primary rRNA binding proteins, it binds directly to 16S rRNA where it helps nucleate assembly of the platform of the 30S subunit by binding and bridging several RNA helices of the 16S rRNA. In terms of biological role, forms an intersubunit bridge (bridge B4) with the 23S rRNA of the 50S subunit in the ribosome. The sequence is that of Small ribosomal subunit protein uS15 from Thermotoga maritima (strain ATCC 43589 / DSM 3109 / JCM 10099 / NBRC 100826 / MSB8).